We begin with the raw amino-acid sequence, 274 residues long: Rhamnulose-1-phosphate aldolase (274 aa).

Glu-117 is a catalytic residue. Zn(2+) contacts are provided by His-141, His-143, and His-212.

Belongs to the aldolase class II family. RhaD subfamily. In terms of assembly, homotetramer. Requires Zn(2+) as cofactor.

It is found in the cytoplasm. The enzyme catalyses L-rhamnulose 1-phosphate = (S)-lactaldehyde + dihydroxyacetone phosphate. Its pathway is carbohydrate degradation; L-rhamnose degradation; glycerone phosphate from L-rhamnose: step 3/3. Its function is as follows. Catalyzes the reversible cleavage of L-rhamnulose-1-phosphate to dihydroxyacetone phosphate (DHAP) and L-lactaldehyde. This is Rhamnulose-1-phosphate aldolase from Escherichia coli O6:H1 (strain CFT073 / ATCC 700928 / UPEC).